The following is a 360-amino-acid chain: 3-dehydroquinate synthase (360 aa).

NAD(+) contacts are provided by residues 105–109, 129–130, lysine 142, lysine 151, and 169–172; these read GVVGD, TT, and TLKT. Glutamate 184, histidine 247, and histidine 263 together coordinate Zn(2+).

The protein belongs to the sugar phosphate cyclases superfamily. Dehydroquinate synthase family. Co(2+) serves as cofactor. Zn(2+) is required as a cofactor. It depends on NAD(+) as a cofactor.

It is found in the cytoplasm. It catalyses the reaction 7-phospho-2-dehydro-3-deoxy-D-arabino-heptonate = 3-dehydroquinate + phosphate. Its pathway is metabolic intermediate biosynthesis; chorismate biosynthesis; chorismate from D-erythrose 4-phosphate and phosphoenolpyruvate: step 2/7. Catalyzes the conversion of 3-deoxy-D-arabino-heptulosonate 7-phosphate (DAHP) to dehydroquinate (DHQ). In Acetivibrio thermocellus (strain ATCC 27405 / DSM 1237 / JCM 9322 / NBRC 103400 / NCIMB 10682 / NRRL B-4536 / VPI 7372) (Clostridium thermocellum), this protein is 3-dehydroquinate synthase.